Consider the following 391-residue polypeptide: MTFLSPPEIPTIKADNGTYYDFNNGARILFPKGEWHVNIIDEESGNILFSCDTKAGWVTSTKKYYVKFRIQAFKKGDEKPFLDTVMELKDKPVLISFPTGTLGDIIAWFHYAEKFRIKHQCKLECSVSEEFITLLSDNYPDIKFTSAQDKYEGKPYATYRIGLFFNGDTDNQPVDFRLVGFHRNAGYILGVSPQEDPPRLNLSAERKIQEPYVCIAVQSTAQAKHWNNGLGWAEVVRYLKELGYRVLCIDRNAHAGNGFVWNHIPWGAEDFTGALPLQERVDLLRHASFFVGLSSGLSWLAWASRIPVVLISGFSRPDSEFYTPWRVFNSHGCNGCWDNTNYNFDHTDFLWCPVHKGTDRQFECTRLITGKQVCGVIRTLHSYLTNHDRII.

ADP-D-glycero-beta-D-manno-heptose contacts are provided by Thr101, Leu102, and Gly103. The active-site Proton acceptor is Asp104. ADP-D-glycero-beta-D-manno-heptose contacts are provided by Gln218, Thr220, Lys224, Arg251, Leu275, Gly296, and Glu320. Cys333, Cys336, Cys352, and Cys364 together coordinate Fe(3+).

It belongs to the glycosyltransferase 9 family. In terms of assembly, homododecamer composed of 6 homodimers forming a ring. Requires Fe(3+) as cofactor.

Its subcellular location is the cytoplasm. It catalyses the reaction ADP-D-glycero-beta-D-manno-heptose + L-seryl-[protein] = O-(D-glycero-alpha-D-manno-heptosyl)-L-seryl-[protein] + ADP + H(+). The catalysed reaction is ADP-L-glycero-beta-D-manno-heptose + L-seryl-[protein] = O-(L-glycero-alpha-D-manno-heptosyl)-L-seryl-[protein] + ADP + H(+). Its function is as follows. Glycosylates autotransporter AIDA-I. Catalyzes the addition of both L, D-heptose and D, D-heptose sugars. Probably by glycosylating AIDA-I, involved in bacteria adhesion to host mammalian cells. The chain is Autotransporter heptosyltransferase Aah from Escherichia coli.